The chain runs to 382 residues: Regulatory protein RapC (382 aa).

TPR repeat units lie at residues 102–138 (YYVNFFRGMYEFDKREFISAITYYKQAEKKLSFVADH), 149–182 (AEAYYYMKQTYFSLINIKNAYEIYVEQETYNVRI), 183–216 (IQCHFVFGVNLMDERNFEQAARHFKLALNMAQAE), 223–256 (GRAYYNLGLCYYNQDLLDPAIDYFEKAVSTFESS), and 263–296 (PQAYFLITLIYYKQGKHDKASEYHKRGYEYAKET).

This sequence belongs to the Rap family. In terms of assembly, homodimer. Interacts specifically with the C-terminal DNA-binding domain of ComA. Interacts with CSF.

It is found in the cytoplasm. Its activity is regulated as follows. Inhibited by the competence and sporulation stimulating factor (CSF), encoded by phrC, which prevents RapC-ComA interaction. In terms of biological role, involved in the regulation of genetic competence development. Inhibits the activity of ComA, a transcriptional factor that regulates the development of genetic competence. Acts by binding to ComA, independently of its phosphorylation state, leading to the inhibition of ComA DNA-binding activity. Does not dephosphorylate phospho-ComA and does not affect the phosphorylation level of the ComP-ComA system. The chain is Regulatory protein RapC (rapC) from Bacillus subtilis (strain 168).